The following is a 156-amino-acid chain: Small ribosomal subunit protein uS7 (156 aa).

This sequence belongs to the universal ribosomal protein uS7 family. As to quaternary structure, part of the 30S ribosomal subunit. Contacts proteins S9 and S11.

In terms of biological role, one of the primary rRNA binding proteins, it binds directly to 16S rRNA where it nucleates assembly of the head domain of the 30S subunit. Is located at the subunit interface close to the decoding center, probably blocks exit of the E-site tRNA. This is Small ribosomal subunit protein uS7 from Pectobacterium carotovorum subsp. carotovorum (strain PC1).